A 257-amino-acid chain; its full sequence is Acetylglutamate kinase (257 aa).

Substrate-binding positions include 40–41 (GG), arginine 62, and asparagine 155.

The protein belongs to the acetylglutamate kinase family. ArgB subfamily.

The protein resides in the cytoplasm. It carries out the reaction N-acetyl-L-glutamate + ATP = N-acetyl-L-glutamyl 5-phosphate + ADP. It functions in the pathway amino-acid biosynthesis; L-arginine biosynthesis; N(2)-acetyl-L-ornithine from L-glutamate: step 2/4. In terms of biological role, catalyzes the ATP-dependent phosphorylation of N-acetyl-L-glutamate. In Shouchella clausii (strain KSM-K16) (Alkalihalobacillus clausii), this protein is Acetylglutamate kinase.